Reading from the N-terminus, the 314-residue chain is tRNA dimethylallyltransferase (314 aa).

9-16 (GPTAVGKT) provides a ligand contact to ATP. 11-16 (TAVGKT) lines the substrate pocket. The tract at residues 34–37 (DSVQ) is interaction with substrate tRNA.

The protein belongs to the IPP transferase family. In terms of assembly, monomer. Mg(2+) is required as a cofactor.

The enzyme catalyses adenosine(37) in tRNA + dimethylallyl diphosphate = N(6)-dimethylallyladenosine(37) in tRNA + diphosphate. Catalyzes the transfer of a dimethylallyl group onto the adenine at position 37 in tRNAs that read codons beginning with uridine, leading to the formation of N6-(dimethylallyl)adenosine (i(6)A). This is tRNA dimethylallyltransferase from Desulfitobacterium hafniense (strain DSM 10664 / DCB-2).